A 215-amino-acid polypeptide reads, in one-letter code: MELFLDTANVDEIREAAALGVISGVTTNPSLIAREGRDFTQVVREITGLVDGPVSAEVISTEAEAMVAEAEELSQIHPNVVIKIPMILEGLKAVSMLEPRGIRTNVTLVFSANQALLAALAGASFVSPFVGRLDDAGHDGMEVVRDTVDIFDLYELPTRVIAASIRHPLHVLAAAKAGAHIATVPYQVLMQMAGHPLTDVGLRKFLDDWARLKKR.

The Schiff-base intermediate with substrate role is filled by Lys-83.

The protein belongs to the transaldolase family. Type 3B subfamily.

It is found in the cytoplasm. The enzyme catalyses D-sedoheptulose 7-phosphate + D-glyceraldehyde 3-phosphate = D-erythrose 4-phosphate + beta-D-fructose 6-phosphate. The protein operates within carbohydrate degradation; pentose phosphate pathway; D-glyceraldehyde 3-phosphate and beta-D-fructose 6-phosphate from D-ribose 5-phosphate and D-xylulose 5-phosphate (non-oxidative stage): step 2/3. Transaldolase is important for the balance of metabolites in the pentose-phosphate pathway. This is Probable transaldolase from Desulforudis audaxviator (strain MP104C).